Reading from the N-terminus, the 373-residue chain is Protein-glutamate methylesterase/protein-glutamine glutaminase 2 (373 aa).

Residues 4 to 121 (KVLVVDDSGF…SRNPEKVKQL (118 aa)) form the Response regulatory domain. At aspartate 55 the chain carries 4-aspartylphosphate. The tract at residues 136 to 181 (FSSYSAPAPQPASAPAPAPSSFASSRSPAPAPAPARAAAPAASANS) is disordered. Positions 143-153 (APQPASAPAPA) are enriched in pro residues. The span at 154 to 181 (PSSFASSRSPAPAPAPARAAAPAASANS) shows a compositional bias: low complexity. Residues 182–370 (PAPKRKAYKL…LDDIGRHLVE (189 aa)) form the CheB-type methylesterase domain. Active-site residues include serine 197, histidine 224, and aspartate 317.

This sequence belongs to the CheB family. Post-translationally, phosphorylated by CheA. Phosphorylation of the N-terminal regulatory domain activates the methylesterase activity.

The protein localises to the cytoplasm. It carries out the reaction [protein]-L-glutamate 5-O-methyl ester + H2O = L-glutamyl-[protein] + methanol + H(+). It catalyses the reaction L-glutaminyl-[protein] + H2O = L-glutamyl-[protein] + NH4(+). Involved in chemotaxis. Part of a chemotaxis signal transduction system that modulates chemotaxis in response to various stimuli. Catalyzes the demethylation of specific methylglutamate residues introduced into the chemoreceptors (methyl-accepting chemotaxis proteins or MCP) by CheR. Also mediates the irreversible deamidation of specific glutamine residues to glutamic acid. The protein is Protein-glutamate methylesterase/protein-glutamine glutaminase 2 of Pseudomonas fluorescens (strain ATCC BAA-477 / NRRL B-23932 / Pf-5).